The sequence spans 454 residues: Glutamate--tRNA ligase (454 aa).

Positions 7 to 17 match the 'HIGH' region motif; sequence PSPTGCLHIGG. Positions 96, 98, 123, and 125 each coordinate Zn(2+). Residues 230 to 234 carry the 'KMSKS' region motif; it reads RLSKR. Lys-233 lines the ATP pocket.

This sequence belongs to the class-I aminoacyl-tRNA synthetase family. Glutamate--tRNA ligase type 1 subfamily. Monomer. The cofactor is Zn(2+).

The protein localises to the cytoplasm. The enzyme catalyses tRNA(Glu) + L-glutamate + ATP = L-glutamyl-tRNA(Glu) + AMP + diphosphate. Functionally, catalyzes the attachment of glutamate to tRNA(Glu) in a two-step reaction: glutamate is first activated by ATP to form Glu-AMP and then transferred to the acceptor end of tRNA(Glu). The chain is Glutamate--tRNA ligase from Ruthia magnifica subsp. Calyptogena magnifica.